We begin with the raw amino-acid sequence, 144 residues long: Superoxide dismutase [Mn] (144 aa).

Residues 1 to 22 (GYVNGLESAEETLAENRESGDF) are disordered. Histidine 42, aspartate 124, and histidine 128 together coordinate Mn(2+).

It belongs to the iron/manganese superoxide dismutase family. Mn(2+) serves as cofactor.

It catalyses the reaction 2 superoxide + 2 H(+) = H2O2 + O2. Functionally, destroys superoxide anion radicals which are normally produced within the cells and which are toxic to biological systems. In Haloarcula hispanica, this protein is Superoxide dismutase [Mn] (sod).